The sequence spans 214 residues: Probable transaldolase (214 aa).

Lys-83 functions as the Schiff-base intermediate with substrate in the catalytic mechanism.

It belongs to the transaldolase family. Type 3B subfamily.

It is found in the cytoplasm. It catalyses the reaction D-sedoheptulose 7-phosphate + D-glyceraldehyde 3-phosphate = D-erythrose 4-phosphate + beta-D-fructose 6-phosphate. The protein operates within carbohydrate degradation; pentose phosphate pathway; D-glyceraldehyde 3-phosphate and beta-D-fructose 6-phosphate from D-ribose 5-phosphate and D-xylulose 5-phosphate (non-oxidative stage): step 2/3. Its function is as follows. Transaldolase is important for the balance of metabolites in the pentose-phosphate pathway. In Geotalea daltonii (strain DSM 22248 / JCM 15807 / FRC-32) (Geobacter daltonii), this protein is Probable transaldolase.